A 310-amino-acid polypeptide reads, in one-letter code: Elongation factor Ts, mitochondrial (310 aa).

Residues 1-42 (MGFQVLRSVIQAPLAKRSFLCKSCPSGLRVLYNNILLSSRSY) constitute a mitochondrion transit peptide.

Belongs to the EF-Ts family.

Its subcellular location is the mitochondrion. Functionally, associates with the EF-Tu.GDP complex and induces the exchange of GDP to GTP. It remains bound to the aminoacyl-tRNA.EF-Tu.GTP complex up to the GTP hydrolysis stage on the ribosome. The polypeptide is Elongation factor Ts, mitochondrial (tsf1) (Schizosaccharomyces japonicus (strain yFS275 / FY16936) (Fission yeast)).